The sequence spans 283 residues: 4-diphosphocytidyl-2-C-methyl-D-erythritol kinase (283 aa).

Lys-10 is an active-site residue. 99–109 provides a ligand contact to ATP; sequence PMGGGLGGGSS. Residue Asp-141 is part of the active site.

This sequence belongs to the GHMP kinase family. IspE subfamily. Homodimer.

The catalysed reaction is 4-CDP-2-C-methyl-D-erythritol + ATP = 4-CDP-2-C-methyl-D-erythritol 2-phosphate + ADP + H(+). Its pathway is isoprenoid biosynthesis; isopentenyl diphosphate biosynthesis via DXP pathway; isopentenyl diphosphate from 1-deoxy-D-xylulose 5-phosphate: step 3/6. Its function is as follows. Catalyzes the phosphorylation of the position 2 hydroxy group of 4-diphosphocytidyl-2C-methyl-D-erythritol. This Salmonella paratyphi C (strain RKS4594) protein is 4-diphosphocytidyl-2-C-methyl-D-erythritol kinase.